Reading from the N-terminus, the 147-residue chain is Ribosomal RNA large subunit methyltransferase H (147 aa).

S-adenosyl-L-methionine is bound by residues L66, G95, and 114–119 (LSELTF).

Belongs to the RNA methyltransferase RlmH family. As to quaternary structure, homodimer.

It localises to the cytoplasm. The enzyme catalyses pseudouridine(1915) in 23S rRNA + S-adenosyl-L-methionine = N(3)-methylpseudouridine(1915) in 23S rRNA + S-adenosyl-L-homocysteine + H(+). Its function is as follows. Specifically methylates the pseudouridine at position 1915 (m3Psi1915) in 23S rRNA. The protein is Ribosomal RNA large subunit methyltransferase H of Synechococcus sp. (strain RCC307).